The following is a 291-amino-acid chain: Elongation factor Ts (291 aa).

An involved in Mg(2+) ion dislocation from EF-Tu region spans residues 78 to 81 (TDFV).

Belongs to the EF-Ts family.

The protein resides in the cytoplasm. In terms of biological role, associates with the EF-Tu.GDP complex and induces the exchange of GDP to GTP. It remains bound to the aminoacyl-tRNA.EF-Tu.GTP complex up to the GTP hydrolysis stage on the ribosome. The protein is Elongation factor Ts of Ureaplasma parvum serovar 3 (strain ATCC 27815 / 27 / NCTC 11736).